The following is a 425-amino-acid chain: 2,3-diketo-L-gulonate TRAP transporter large permease protein YiaN (425 aa).

11 helical membrane-spanning segments follow: residues 3-23 (VLIF…IAWA), 54-74 (FSLL…AGGL), 93-113 (LGYV…SAVA), 139-159 (LIAS…FIIF), 170-190 (LFMA…LTWW), 209-229 (IWHS…IIGG), 235-255 (FTPT…ATVI), 277-297 (VVMF…IAEL), 314-334 (LLFI…DLTP), 355-375 (IYFG…PPIG), and 399-419 (YVLV…LIIL).

Belongs to the TRAP transporter large permease family. As to quaternary structure, the complex comprises the extracytoplasmic solute receptor protein YiaO, and the two transmembrane proteins YiaM and YiaN.

Its subcellular location is the cell inner membrane. In terms of biological role, part of the tripartite ATP-independent periplasmic (TRAP) transport system YiaMNO involved in the uptake of 2,3-diketo-L-gulonate. This chain is 2,3-diketo-L-gulonate TRAP transporter large permease protein YiaN (yiaN), found in Escherichia coli (strain K12).